The primary structure comprises 196 residues: Small nuclear ribonucleoprotein-associated protein B (196 aa).

The Sm domain occupies 7–101; it reads AHSSRLANLI…ILSTVVEDKP (95 aa). A Nuclear localization signal motif is present at residues 105 to 132; that stretch reads KKERLVRDKKEKKQAQKQTKLRKEKEKK. A compositionally biased stretch (basic and acidic residues) spans 108-118; the sequence is RLVRDKKEKKQ. Residues 108 to 196 are disordered; that stretch reads RLVRDKKEKK…FQPPPGFKRK (89 aa). A compositionally biased stretch (polar residues) spans 140 to 181; it reads NTANAKHTSSNSREIAQPSSSRYNGGNDNIGANRSRFNNEAP.

The protein belongs to the snRNP SmB/SmN family. In terms of assembly, component of the Sm core complex, present in spliceosomal snRNP U1, U2, U4/U6 and U5. The core complex contains SMB1, SMD1, SMD2, SMD3, SME1, SMX3 and SMX2 (Sm proteins B, D1, D2, D3, E, F and G, respectively), and is probably a heptameric ring structure. SMB1 specifically interacts with SMD3. Belongs to the CWC complex (or CEF1-associated complex), a spliceosome sub-complex reminiscent of a late-stage spliceosome composed of the U2, U5 and U6 snRNAs and at least BUD13, BUD31, BRR2, CDC40, CEF1, CLF1, CUS1, CWC2, CWC15, CWC21, CWC22, CWC23, CWC24, CWC25, CWC27, ECM2, HSH155, IST3, ISY1, LEA1, MSL1, NTC20, PRP8, PRP9, PRP11, PRP19, PRP21, PRP22, PRP45, PRP46, SLU7, SMB1, SMD1, SMD2, SMD3, SMX2, SMX3, SNT309, SNU114, SPP2, SYF1, SYF2, RSE1 and YJU2. Component of the U4/U6-U5 tri-snRNP complex composed of the U4, U6 and U5 snRNAs and at least PRP3, PRP4, PRP6, PRP8, PRP18, PRP38, SNU13, SNU23, SNU66, SNU114, SPP381, SMB1, SMD1, SMD2, SMD3, SMX2, SMX3, LSM2, LSM3, LSM4, LSM5, LSM6, LSM7, LSM8, BRR2 and DIB1. Interacts with the trimethylguanosine synthase TGS1.

It is found in the nucleus. It localises to the cytoplasm. Functionally, plays a role in pre-mRNA splicing as a core component of the spliceosomal U1, U2, U4 and U5 small nuclear ribonucleoproteins (snRNPs), the building blocks of the spliceosome. This is Small nuclear ribonucleoprotein-associated protein B (SMB1) from Saccharomyces cerevisiae (strain ATCC 204508 / S288c) (Baker's yeast).